Reading from the N-terminus, the 344-residue chain is Isopentenyl-diphosphate delta-isomerase (344 aa).

9-10 (RK) is a substrate binding site. FMN contacts are provided by residues 65-67 (AMT), serine 95, and asparagine 124. Glutamine 154 is a substrate binding site. Residue glutamate 155 participates in Mg(2+) binding. Residues lysine 185, threonine 215, 259–261 (GVR), and 280–281 (SG) contribute to the FMN site.

This sequence belongs to the IPP isomerase type 2 family. Homooctamer. Dimer of tetramers. The cofactor is FMN. NADPH serves as cofactor. Mg(2+) is required as a cofactor.

The protein localises to the cytoplasm. It catalyses the reaction isopentenyl diphosphate = dimethylallyl diphosphate. Its function is as follows. Involved in the biosynthesis of isoprenoids. Catalyzes the 1,3-allylic rearrangement of the homoallylic substrate isopentenyl (IPP) to its allylic isomer, dimethylallyl diphosphate (DMAPP). The polypeptide is Isopentenyl-diphosphate delta-isomerase (Lacticaseibacillus casei (strain BL23) (Lactobacillus casei)).